Reading from the N-terminus, the 461-residue chain is CBL-interacting protein kinase 5 (461 aa).

The Protein kinase domain maps to 12–266 (YELGRMLGQG…VEKLVEHPWF (255 aa)). Residues 18–26 (LGQGTFAKV) and lysine 41 contribute to the ATP site. Catalysis depends on aspartate 134, which acts as the Proton acceptor. The tract at residues 152–181 (DFGLSAFKECQKQDGLLHTTCGTPAYVAPE) is activation loop. Positions 300-334 (EGKAKEPASSLKPVSLNAFDIISLSKGFDLSGLFE) constitute an NAF domain. The tract at residues 340–369 (KADSRFMTQKPASAIVSKLEQIAETESFKV) is PPI. The tract at residues 440–461 (HPSLAQSSTLTQSSKSISRHAI) is disordered. A compositionally biased stretch (low complexity) spans 442-455 (SLAQSSTLTQSSKS).

It belongs to the protein kinase superfamily. CAMK Ser/Thr protein kinase family. SNF1 subfamily. Mn(2+) serves as cofactor.

The enzyme catalyses L-seryl-[protein] + ATP = O-phospho-L-seryl-[protein] + ADP + H(+). It catalyses the reaction L-threonyl-[protein] + ATP = O-phospho-L-threonyl-[protein] + ADP + H(+). Its function is as follows. CIPK serine-threonine protein kinases interact with CBL proteins. Binding of a CBL protein to the regulatory NAF domain of CIPK protein lead to the activation of the kinase in a calcium-dependent manner. The chain is CBL-interacting protein kinase 5 (CIPK5) from Oryza sativa subsp. japonica (Rice).